We begin with the raw amino-acid sequence, 87 residues long: MAHKKGASSTRNGRDSNAQYLGVKRFGGQVVSAGEIIVRQRGTHFHPGAGVGRGGDDTLFALTPGAVEFGTRRGRRVVNIVAAAAAE.

Belongs to the bacterial ribosomal protein bL27 family.

This chain is Large ribosomal subunit protein bL27, found in Pseudarthrobacter chlorophenolicus (strain ATCC 700700 / DSM 12829 / CIP 107037 / JCM 12360 / KCTC 9906 / NCIMB 13794 / A6) (Arthrobacter chlorophenolicus).